We begin with the raw amino-acid sequence, 349 residues long: tRNA-specific 2-thiouridylase MnmA (349 aa).

ATP contacts are provided by residues 7-14 and Leu-33; that span reads GLSGGVDS. The Nucleophile role is filled by Cys-94. The cysteines at positions 94 and 193 are disulfide-linked. Gly-119 serves as a coordination point for ATP. Positions 143–145 are interaction with tRNA; the sequence is KDQ. Cys-193 serves as the catalytic Cysteine persulfide intermediate. Residues 298 to 299 are interaction with tRNA; sequence RY.

The protein belongs to the MnmA/TRMU family.

It localises to the cytoplasm. The catalysed reaction is S-sulfanyl-L-cysteinyl-[protein] + uridine(34) in tRNA + AH2 + ATP = 2-thiouridine(34) in tRNA + L-cysteinyl-[protein] + A + AMP + diphosphate + H(+). In terms of biological role, catalyzes the 2-thiolation of uridine at the wobble position (U34) of tRNA, leading to the formation of s(2)U34. In Rippkaea orientalis (strain PCC 8801 / RF-1) (Cyanothece sp. (strain PCC 8801)), this protein is tRNA-specific 2-thiouridylase MnmA.